Here is a 155-residue protein sequence, read N- to C-terminus: 3-hydroxyacyl-[acyl-carrier-protein] dehydratase FabZ (155 aa).

Residue histidine 61 is part of the active site.

Belongs to the thioester dehydratase family. FabZ subfamily.

It is found in the cytoplasm. It carries out the reaction a (3R)-hydroxyacyl-[ACP] = a (2E)-enoyl-[ACP] + H2O. In terms of biological role, involved in unsaturated fatty acids biosynthesis. Catalyzes the dehydration of short chain beta-hydroxyacyl-ACPs and long chain saturated and unsaturated beta-hydroxyacyl-ACPs. The protein is 3-hydroxyacyl-[acyl-carrier-protein] dehydratase FabZ of Synechococcus elongatus (strain ATCC 33912 / PCC 7942 / FACHB-805) (Anacystis nidulans R2).